The primary structure comprises 66 residues: ATP synthase F(0) complex subunit 8 (66 aa).

Residues 8 to 24 (IWLLAVVIVLTTLMIFL) form a helical membrane-spanning segment. K54 carries the post-translational modification N6-acetyllysine; alternate. An N6-succinyllysine; alternate modification is found at K54. The residue at position 57 (K57) is an N6-acetyllysine.

Belongs to the ATPase protein 8 family. In terms of assembly, component of the ATP synthase complex composed at least of ATP5F1A/subunit alpha, ATP5F1B/subunit beta, ATP5MC1/subunit c (homooctomer), MT-ATP6/subunit a, MT-ATP8/subunit 8, ATP5ME/subunit e, ATP5MF/subunit f, ATP5MG/subunit g, ATP5MK/subunit k, ATP5MJ/subunit j, ATP5F1C/subunit gamma, ATP5F1D/subunit delta, ATP5F1E/subunit epsilon, ATP5PF/subunit F6, ATP5PB/subunit b, ATP5PD/subunit d, ATP5PO/subunit OSCP. ATP synthase complex consists of a soluble F(1) head domain (subunits alpha(3) and beta(3)) - the catalytic core - and a membrane F(0) domain - the membrane proton channel (subunits c, a, 8, e, f, g, k and j). These two domains are linked by a central stalk (subunits gamma, delta, and epsilon) rotating inside the F1 region and a stationary peripheral stalk (subunits F6, b, d, and OSCP). Interacts with PRICKLE3.

The protein resides in the mitochondrion membrane. Its function is as follows. Subunit 8, of the mitochondrial membrane ATP synthase complex (F(1)F(0) ATP synthase or Complex V) that produces ATP from ADP in the presence of a proton gradient across the membrane which is generated by electron transport complexes of the respiratory chain. ATP synthase complex consist of a soluble F(1) head domain - the catalytic core - and a membrane F(1) domain - the membrane proton channel. These two domains are linked by a central stalk rotating inside the F(1) region and a stationary peripheral stalk. During catalysis, ATP synthesis in the catalytic domain of F(1) is coupled via a rotary mechanism of the central stalk subunits to proton translocation. In vivo, can only synthesize ATP although its ATP hydrolase activity can be activated artificially in vitro. Part of the complex F(0) domain. The sequence is that of ATP synthase F(0) complex subunit 8 from Mammuthus primigenius (Siberian woolly mammoth).